Here is a 186-residue protein sequence, read N- to C-terminus: MGRYSRESDNVAKSCKARGPNLRVHFKNTHETAQAIKRMPLRRAQRYLKAVIDQKECVPFRRFNGGVGRCAQAKQWKTTQGRWPKKSAEFLLQLLRNAEANADCKGLDADRLVVHHIQVNRAQCLRRRTYRAHGRINPYMSSPCHVEVILTEKEELVSKATDDEPAKKKLSKKKLQRQKEKMLRSE.

Position 158 is a phosphoserine (Ser158). Positions 159 to 186 (KATDDEPAKKKLSKKKLQRQKEKMLRSE) are disordered. Thr161 carries the post-translational modification Phosphothreonine. Residues 177-186 (RQKEKMLRSE) show a composition bias toward basic and acidic residues.

Belongs to the universal ribosomal protein uL22 family.

This Drosophila melanogaster (Fruit fly) protein is Large ribosomal subunit protein uL22 (RpL17).